The primary structure comprises 492 residues: Bifunctional purine biosynthesis protein PurH (492 aa).

One can recognise an MGS-like domain in the interval 1 to 144; the sequence is MKKAILSVSN…KNYKHVTTIV (144 aa).

The protein belongs to the PurH family.

It catalyses the reaction (6R)-10-formyltetrahydrofolate + 5-amino-1-(5-phospho-beta-D-ribosyl)imidazole-4-carboxamide = 5-formamido-1-(5-phospho-D-ribosyl)imidazole-4-carboxamide + (6S)-5,6,7,8-tetrahydrofolate. It carries out the reaction IMP + H2O = 5-formamido-1-(5-phospho-D-ribosyl)imidazole-4-carboxamide. The protein operates within purine metabolism; IMP biosynthesis via de novo pathway; 5-formamido-1-(5-phospho-D-ribosyl)imidazole-4-carboxamide from 5-amino-1-(5-phospho-D-ribosyl)imidazole-4-carboxamide (10-formyl THF route): step 1/1. Its pathway is purine metabolism; IMP biosynthesis via de novo pathway; IMP from 5-formamido-1-(5-phospho-D-ribosyl)imidazole-4-carboxamide: step 1/1. This Staphylococcus aureus (strain MSSA476) protein is Bifunctional purine biosynthesis protein PurH.